Here is a 99-residue protein sequence, read N- to C-terminus: MAEDHPSVDLDTHLSSPRESEESAPKKNRQFYRKKVCRFCTQKLLADYKDPDTLRRFITERGKILPRRITGTCAKHQRRVALEVKRSRAVALLPFVLTE.

A compositionally biased stretch (basic and acidic residues) spans 1 to 25 (MAEDHPSVDLDTHLSSPRESEESAP). The disordered stretch occupies residues 1-28 (MAEDHPSVDLDTHLSSPRESEESAPKKN).

The protein belongs to the bacterial ribosomal protein bS18 family. Part of the 30S ribosomal subunit. Forms a tight heterodimer with protein bS6.

Its function is as follows. Binds as a heterodimer with protein bS6 to the central domain of the 16S rRNA, where it helps stabilize the platform of the 30S subunit. The protein is Small ribosomal subunit protein bS18 of Treponema pallidum (strain Nichols).